The primary structure comprises 151 residues: Mitochondrial intermembrane space import and assembly protein 40 homolog (151 aa).

The segment at 1–35 (MGQGLSQPAQAVEEPSPPAVEAAPSSSPSPAPAPS) is disordered. Positions 7–26 (QPAQAVEEPSPPAVEAAPSS) are enriched in low complexity. 3 disulfide bridges follow: Cys-65-Cys-67, Cys-76-Cys-109, and Cys-86-Cys-99. The CHCH domain maps to 73 to 117 (NGPCGSQFVDAFSCFLKSTEEEKGSDCVKPFIALQDCIKINPEAF). Short sequence motifs (cx9C motif) lie at residues 76–86 (CGSQFVDAFSC) and 99–109 (CVKPFIALQDC). The disordered stretch occupies residues 123–151 (EEEENDEEAEKSNLKVRAPAWSRESKPKL).

It localises to the mitochondrion intermembrane space. The protein localises to the peroxisome matrix. Required for the import and folding of small cysteine-containing proteins in the mitochondrial intermembrane space. The protein is Mitochondrial intermembrane space import and assembly protein 40 homolog of Oryza sativa subsp. japonica (Rice).